A 120-amino-acid chain; its full sequence is MAYAKLGRDSAARKALLRDLATDLIINERIETTEAKAKELRSVVEKMITLGKRGDLHARRQAAAFIRREVADEETGQDAIQKLFSDIAPRYEDRQGGYTRVLKVGPRRGDGAPMAIIELV.

It belongs to the bacterial ribosomal protein bL17 family. Part of the 50S ribosomal subunit. Contacts protein L32.

The polypeptide is Large ribosomal subunit protein bL17 (Halalkalibacterium halodurans (strain ATCC BAA-125 / DSM 18197 / FERM 7344 / JCM 9153 / C-125) (Bacillus halodurans)).